The chain runs to 188 residues: Ribosome maturation factor RimM (188 aa).

In terms of domain architecture, PRC barrel spans 98-174 (EGTFYYHDLR…HLTADAPAGL (77 aa)). Positions 169 to 188 (DAPAGLIGPEPGEEDGAAES) are disordered. The segment covering 179–188 (PGEEDGAAES) has biased composition (acidic residues).

This sequence belongs to the RimM family. In terms of assembly, binds ribosomal protein uS19.

Its subcellular location is the cytoplasm. Functionally, an accessory protein needed during the final step in the assembly of 30S ribosomal subunit, possibly for assembly of the head region. Essential for efficient processing of 16S rRNA. May be needed both before and after RbfA during the maturation of 16S rRNA. It has affinity for free ribosomal 30S subunits but not for 70S ribosomes. This is Ribosome maturation factor RimM from Deinococcus radiodurans (strain ATCC 13939 / DSM 20539 / JCM 16871 / CCUG 27074 / LMG 4051 / NBRC 15346 / NCIMB 9279 / VKM B-1422 / R1).